Reading from the N-terminus, the 171-residue chain is Glucagon family neuropeptides (171 aa).

Residues 1–22 (MYRKALLVWLLVYGIMRCTVHS) form the signal peptide. A propeptide spanning residues 23–76 (SPTALKYPALRLEDEVYDEDGNTLPDFAFDNNPIGIGNPASVFDDMYSFYYPAE) is cleaved from the precursor. The important for receptor binding stretch occupies residues 145 to 153 (VKKYLAAVL). A Lysine amide modification is found at Lys-164. A propeptide spanning residues 168-171 (VAYL) is cleaved from the precursor.

It belongs to the glucagon family.

It localises to the secreted. Primary role of GRF is to release GH from the pituitary. Its function is as follows. PACAP is a neuropeptide involved in diverse array of physiological processes through activating the PACAP subfamily of class B1 G protein-coupled receptors: VIP receptor 1 (VIPR1), VIP receptor 2 (VIPR2), and PACAP type I receptor (ADCYAP1R1). Exerts neuroprotective and general cytoprotective effects due to anti-apoptotic, anti-inflammatory, and antioxidant actions. This Pelophylax ridibundus (Marsh frog) protein is Glucagon family neuropeptides (adcyap1).